The following is a 158-amino-acid chain: Eukaryotic translation initiation factor 5A (158 aa).

Lysine 51 carries the hypusine modification.

The protein belongs to the eIF-5A family. Lys-51 undergoes hypusination, a unique post-translational modification that consists in the addition of a butylamino group from spermidine to lysine side chain, leading to the formation of the unusual amino acid hypusine. eIF-5As are the only known proteins to undergo this modification, which is essential for their function.

It is found in the cytoplasm. Its function is as follows. Translation factor that promotes translation elongation and termination, particularly upon ribosome stalling at specific amino acid sequence contexts. Binds between the exit (E) and peptidyl (P) site of the ribosome and promotes rescue of stalled ribosome: specifically required for efficient translation of polyproline-containing peptides as well as other motifs that stall the ribosome. Acts as a ribosome quality control (RQC) cofactor by joining the RQC complex to facilitate peptidyl transfer during CAT tailing step. This Candida albicans (strain SC5314 / ATCC MYA-2876) (Yeast) protein is Eukaryotic translation initiation factor 5A (ANB1).